A 225-amino-acid chain; its full sequence is Peptidyl-prolyl cis-trans isomerase D (225 aa).

The signal sequence occupies residues 1–22 (MKLQFFSFITLFACLFTTAIFA). The PPIase cyclophilin-type domain occupies 37–195 (YFDINHGDKQ…KEVIIVESGE (159 aa)). A glycan (N-linked (GlcNAc...) asparagine) is linked at N139. The Prevents secretion from ER signature appears at 222-225 (HDEL).

It belongs to the cyclophilin-type PPIase family. PPIase B subfamily.

The protein resides in the endoplasmic reticulum lumen. The enzyme catalyses [protein]-peptidylproline (omega=180) = [protein]-peptidylproline (omega=0). PPIases accelerate the folding of proteins. It catalyzes the cis-trans isomerization of proline imidic peptide bonds in oligopeptides. This chain is Peptidyl-prolyl cis-trans isomerase D, found in Saccharomyces cerevisiae (strain ATCC 204508 / S288c) (Baker's yeast).